A 285-amino-acid chain; its full sequence is Golgi phosphoprotein 3-like (285 aa).

The tract at residues 1 to 43 is disordered; it reads MTTLTHRTRRTEVSKSCEKKIESEEDTNQERSPDNEDPGDSKD. The span at 10–43 shows a compositional bias: basic and acidic residues; the sequence is RTEVSKSCEKKIESEEDTNQERSPDNEDPGDSKD. A 1,2-diacyl-sn-glycero-3-phospho-(1D-myo-inositol 4-phosphate)-binding residues include Trp67 and Arg76. Ser112 is modified (phosphoserine). 2 residues coordinate a 1,2-diacyl-sn-glycero-3-phospho-(1D-myo-inositol 4-phosphate): Arg157 and Arg160. A beta-hairpin required for oligomerization region spans residues 176-187; the sequence is EKQNFLLFDMTT.

The protein belongs to the GOLPH3/VPS74 family. Homooligomer. Does not interact MYO18; differs from GOLPH3 by its inability to interact with MYO18. May interact with ARF1.

The protein localises to the golgi apparatus. It localises to the golgi stack membrane. The protein resides in the trans-Golgi network membrane. Its function is as follows. Phosphatidylinositol-4-phosphate-binding protein that may antagonize the action of GOLPH3 which is required for the process of vesicle budding at the Golgi and anterograde transport to the plasma membrane. This Rattus norvegicus (Rat) protein is Golgi phosphoprotein 3-like (Golph3l).